The primary structure comprises 272 residues: Glutamate racemase (272 aa).

Residues 16–17 and 48–49 contribute to the substrate site; these read DS and YG. The Proton donor/acceptor role is filled by C79. 80 to 81 lines the substrate pocket; the sequence is NT. Residue C191 is the Proton donor/acceptor of the active site. 192-193 is a substrate binding site; sequence TH.

The protein belongs to the aspartate/glutamate racemases family.

It carries out the reaction L-glutamate = D-glutamate. The protein operates within cell wall biogenesis; peptidoglycan biosynthesis. Provides the (R)-glutamate required for cell wall biosynthesis. The sequence is that of Glutamate racemase from Chlorobium phaeobacteroides (strain DSM 266 / SMG 266 / 2430).